The sequence spans 327 residues: Biotin synthase (327 aa).

In terms of domain architecture, Radical SAM core spans 51–278; it reads QTIQLSTLMS…KSYVRLSAGR (228 aa). [4Fe-4S] cluster is bound by residues C66, C70, and C73. The [2Fe-2S] cluster site is built by C110, C141, C201, and R273.

Belongs to the radical SAM superfamily. Biotin synthase family. Homodimer. [4Fe-4S] cluster serves as cofactor. The cofactor is [2Fe-2S] cluster.

It carries out the reaction (4R,5S)-dethiobiotin + (sulfur carrier)-SH + 2 reduced [2Fe-2S]-[ferredoxin] + 2 S-adenosyl-L-methionine = (sulfur carrier)-H + biotin + 2 5'-deoxyadenosine + 2 L-methionine + 2 oxidized [2Fe-2S]-[ferredoxin]. It participates in cofactor biosynthesis; biotin biosynthesis; biotin from 7,8-diaminononanoate: step 2/2. Catalyzes the conversion of dethiobiotin (DTB) to biotin by the insertion of a sulfur atom into dethiobiotin via a radical-based mechanism. The chain is Biotin synthase from Histophilus somni (strain 2336) (Haemophilus somnus).